Here is a 166-residue protein sequence, read N- to C-terminus: MSKPLCSTGLRWLWLVVVVLIIDLGSKYLILQNFALGDTVGLFPSLNLHYARNYGAAFSFLADSGGWQRWFFAGIAIGICVILLVMMYRSKATQKLNNIAYALIIGGALGNLFDRLWHGFVVDMIDFYVGNWHFATFNLADSAICIGAALIVLEGFLPKPTAKEQA.

3 helical membrane-spanning segments follow: residues 12–32 (WLWL…LILQ), 70–90 (WFFA…MYRS), and 102–122 (ALII…GFVV). Active-site residues include D123 and D141. A helical transmembrane segment spans residues 137-157 (FNLADSAICIGAALIVLEGFL).

It belongs to the peptidase A8 family.

Its subcellular location is the cell inner membrane. It carries out the reaction Release of signal peptides from bacterial membrane prolipoproteins. Hydrolyzes -Xaa-Yaa-Zaa-|-(S,diacylglyceryl)Cys-, in which Xaa is hydrophobic (preferably Leu), and Yaa (Ala or Ser) and Zaa (Gly or Ala) have small, neutral side chains.. It functions in the pathway protein modification; lipoprotein biosynthesis (signal peptide cleavage). This protein specifically catalyzes the removal of signal peptides from prolipoproteins. The chain is Lipoprotein signal peptidase from Salmonella choleraesuis (strain SC-B67).